The sequence spans 129 residues: Larval/pupal rigid cuticle protein 66 (129 aa).

The N-terminal stretch at 1–17 is a signal peptide; the sequence is MLVKFVACFVFVAVASA. In terms of domain architecture, Chitin-binding type R&amp;R spans 18–90; the sequence is SDFSSFSYGV…ALIAAAPYIT (73 aa).

As to expression, expressed in larval wing disc, forewing disc, diapausing wing, adult wing, and in very low amounts in fat body and testes.

Component of the rigid cuticle of the larva and pupa of Hyalophora cecropia. The polypeptide is Larval/pupal rigid cuticle protein 66 (CP66) (Hyalophora cecropia (Cecropia moth)).